We begin with the raw amino-acid sequence, 876 residues long: Valine--tRNA ligase (876 aa).

Residues P44–H54 carry the 'HIGH' region motif. The 'KMSKS' region motif lies at K520–S524. K523 is a binding site for ATP. Residues L805 to A876 are a coiled coil.

The protein belongs to the class-I aminoacyl-tRNA synthetase family. ValS type 1 subfamily. As to quaternary structure, monomer.

The protein localises to the cytoplasm. It carries out the reaction tRNA(Val) + L-valine + ATP = L-valyl-tRNA(Val) + AMP + diphosphate. Catalyzes the attachment of valine to tRNA(Val). As ValRS can inadvertently accommodate and process structurally similar amino acids such as threonine, to avoid such errors, it has a 'posttransfer' editing activity that hydrolyzes mischarged Thr-tRNA(Val) in a tRNA-dependent manner. The polypeptide is Valine--tRNA ligase (Staphylococcus aureus (strain JH1)).